Here is a 122-residue protein sequence, read N- to C-terminus: Large ribosomal subunit protein uL14 (122 aa).

The protein belongs to the universal ribosomal protein uL14 family. Part of the 50S ribosomal subunit. Forms a cluster with proteins L3 and L19. In the 70S ribosome, L14 and L19 interact and together make contacts with the 16S rRNA in bridges B5 and B8.

Binds to 23S rRNA. Forms part of two intersubunit bridges in the 70S ribosome. The polypeptide is Large ribosomal subunit protein uL14 (Mycobacterium tuberculosis (strain ATCC 25177 / H37Ra)).